Here is a 452-residue protein sequence, read N- to C-terminus: Phosphoglucosamine mutase (452 aa).

Catalysis depends on Ser-101, which acts as the Phosphoserine intermediate. Positions 101, 241, 243, and 245 each coordinate Mg(2+). At Ser-101 the chain carries Phosphoserine.

This sequence belongs to the phosphohexose mutase family. Mg(2+) serves as cofactor. In terms of processing, activated by phosphorylation.

The catalysed reaction is alpha-D-glucosamine 1-phosphate = D-glucosamine 6-phosphate. Its function is as follows. Catalyzes the conversion of glucosamine-6-phosphate to glucosamine-1-phosphate. In Lactococcus lactis subsp. lactis (strain IL1403) (Streptococcus lactis), this protein is Phosphoglucosamine mutase.